We begin with the raw amino-acid sequence, 171 residues long: MENFYKVGTIVNTQGLQGEVRILPSTDFANERFSKGAVLALFDDKDNYIQDLKVKSGRLQKNFYVVKFEGFYHINDVEKYKGYVVKIAQENQEELNDGEFYYHEIIGSDVYDNDILIGQISEILQPGANDVWVVKRKGKRDLLLPYIPPVVLKVDVAQHRVDVDIMEGLDD.

The 73-residue stretch at Asp-97–Leu-169 folds into the PRC barrel domain.

Belongs to the RimM family. Binds ribosomal protein uS19.

It is found in the cytoplasm. Functionally, an accessory protein needed during the final step in the assembly of 30S ribosomal subunit, possibly for assembly of the head region. Essential for efficient processing of 16S rRNA. May be needed both before and after RbfA during the maturation of 16S rRNA. It has affinity for free ribosomal 30S subunits but not for 70S ribosomes. The polypeptide is Ribosome maturation factor RimM (Lactococcus lactis subsp. cremoris (strain MG1363)).